We begin with the raw amino-acid sequence, 373 residues long: tRNA-specific 2-thiouridylase MnmA (373 aa).

ATP is bound by residues 12–19 (GMSGGVDS) and methionine 38. Residues 98–100 (NPD) form an interaction with target base in tRNA region. Cysteine 103 serves as the catalytic Nucleophile. Cysteine 103 and cysteine 200 form a disulfide bridge. Glycine 127 is a binding site for ATP. An interaction with tRNA region spans residues 150–152 (KDQ). The active-site Cysteine persulfide intermediate is the cysteine 200. Positions 312–313 (RY) are interaction with tRNA.

It belongs to the MnmA/TRMU family.

Its subcellular location is the cytoplasm. It catalyses the reaction S-sulfanyl-L-cysteinyl-[protein] + uridine(34) in tRNA + AH2 + ATP = 2-thiouridine(34) in tRNA + L-cysteinyl-[protein] + A + AMP + diphosphate + H(+). In terms of biological role, catalyzes the 2-thiolation of uridine at the wobble position (U34) of tRNA, leading to the formation of s(2)U34. The polypeptide is tRNA-specific 2-thiouridylase MnmA (Streptococcus pneumoniae (strain Hungary19A-6)).